Consider the following 34-residue polypeptide: MEVNILGLTATALFIIIPTSFLLILYVKTASNEA.

A helical membrane pass occupies residues 5–25; sequence ILGLTATALFIIIPTSFLLIL.

Belongs to the PsbM family. In terms of assembly, PSII is composed of 1 copy each of membrane proteins PsbA, PsbB, PsbC, PsbD, PsbE, PsbF, PsbH, PsbI, PsbJ, PsbK, PsbL, PsbM, PsbT, PsbX, PsbY, PsbZ, Psb30/Ycf12, at least 3 peripheral proteins of the oxygen-evolving complex and a large number of cofactors. It forms dimeric complexes.

It localises to the plastid. The protein localises to the chloroplast thylakoid membrane. One of the components of the core complex of photosystem II (PSII). PSII is a light-driven water:plastoquinone oxidoreductase that uses light energy to abstract electrons from H(2)O, generating O(2) and a proton gradient subsequently used for ATP formation. It consists of a core antenna complex that captures photons, and an electron transfer chain that converts photonic excitation into a charge separation. This subunit is found at the monomer-monomer interface. The chain is Photosystem II reaction center protein M from Stigeoclonium helveticum (Green alga).